Here is a 289-residue protein sequence, read N- to C-terminus: Diaminopimelate epimerase (289 aa).

Substrate-binding residues include Asn-13, Gln-47, and Asn-67. The Proton donor role is filled by Cys-76. Substrate-binding positions include 77-78 (GN), Asn-167, Asn-200, and 218-219 (ER). The active-site Proton acceptor is Cys-227. 228–229 (GT) is a binding site for substrate.

The protein belongs to the diaminopimelate epimerase family. Homodimer.

Its subcellular location is the cytoplasm. It carries out the reaction (2S,6S)-2,6-diaminopimelate = meso-2,6-diaminopimelate. It functions in the pathway amino-acid biosynthesis; L-lysine biosynthesis via DAP pathway; DL-2,6-diaminopimelate from LL-2,6-diaminopimelate: step 1/1. Catalyzes the stereoinversion of LL-2,6-diaminopimelate (L,L-DAP) to meso-diaminopimelate (meso-DAP), a precursor of L-lysine and an essential component of the bacterial peptidoglycan. The chain is Diaminopimelate epimerase from Burkholderia mallei (strain NCTC 10247).